The chain runs to 419 residues: UDP-N-acetylglucosamine 1-carboxyvinyltransferase 1 (419 aa).

22–23 (KN) lines the phosphoenolpyruvate pocket. Arg92 is a UDP-N-acetyl-alpha-D-glucosamine binding site. Catalysis depends on Cys116, which acts as the Proton donor. Cys116 carries the post-translational modification 2-(S-cysteinyl)pyruvic acid O-phosphothioketal. UDP-N-acetyl-alpha-D-glucosamine-binding positions include 121–125 (RPIDL), Asp306, and Ile328.

It belongs to the EPSP synthase family. MurA subfamily.

It localises to the cytoplasm. The catalysed reaction is phosphoenolpyruvate + UDP-N-acetyl-alpha-D-glucosamine = UDP-N-acetyl-3-O-(1-carboxyvinyl)-alpha-D-glucosamine + phosphate. Its pathway is cell wall biogenesis; peptidoglycan biosynthesis. In terms of biological role, cell wall formation. Adds enolpyruvyl to UDP-N-acetylglucosamine. The sequence is that of UDP-N-acetylglucosamine 1-carboxyvinyltransferase 1 from Streptococcus agalactiae serotype Ia (strain ATCC 27591 / A909 / CDC SS700).